Reading from the N-terminus, the 157-residue chain is S-ribosylhomocysteine lyase (157 aa).

Residues H54, H58, and C124 each coordinate Fe cation.

It belongs to the LuxS family. As to quaternary structure, homodimer. The cofactor is Fe cation.

The catalysed reaction is S-(5-deoxy-D-ribos-5-yl)-L-homocysteine = (S)-4,5-dihydroxypentane-2,3-dione + L-homocysteine. Functionally, involved in the synthesis of autoinducer 2 (AI-2) which is secreted by bacteria and is used to communicate both the cell density and the metabolic potential of the environment. The regulation of gene expression in response to changes in cell density is called quorum sensing. Catalyzes the transformation of S-ribosylhomocysteine (RHC) to homocysteine (HC) and 4,5-dihydroxy-2,3-pentadione (DPD). The protein is S-ribosylhomocysteine lyase of Lactobacillus helveticus (strain DPC 4571).